Consider the following 992-residue polypeptide: UPF0182 protein MT3285 (992 aa).

The next 7 helical transmembrane spans lie at 17 to 39 (RILI…LIDA), 59 to 81 (LATR…FGGL), 113 to 135 (LVGI…SYWA), 169 to 191 (LMLS…AHYI), 212 to 229 (LVSL…AYWL), 255 to 277 (VLPA…FSAI), and 284 to 306 (IPAI…WPLI). Residues 906–938 (PTEAAVPPSPAANPPPPASGPQPPPVTAAPPVP) are disordered. The segment covering 912 to 938 (PPSPAANPPPPASGPQPPPVTAAPPVP) has biased composition (pro residues).

This sequence belongs to the UPF0182 family.

It is found in the cell membrane. In Mycobacterium tuberculosis (strain CDC 1551 / Oshkosh), this protein is UPF0182 protein MT3285.